A 656-amino-acid polypeptide reads, in one-letter code: Period circadian protein (656 aa).

Over residues 1–34 the composition is skewed to low complexity; that stretch reads KVSDSAYSNSCSNSQSQRSGSSKSRLSGSHSSGS. The interval 1–161 is disordered; that stretch reads KVSDSAYSNS…AAQSFPIPSP (161 aa). Residues 53–66 carry the Nuclear localization signal motif; the sequence is KRNKDKSRKKKKNK. The segment covering 53–66 has biased composition (basic residues); that stretch reads KRNKDKSRKKKKNK. Basic and acidic residues predominate over residues 108 to 120; that stretch reads ELQDQQHGEDHSE. PAS domains are found at residues 224 to 359 and 377 to 483; these read DSFC…ATPI and FAIR…RVFQ. A disordered region spans residues 580–656; it reads TSIAGTGGTG…SSRGGSTAIP (77 aa). Tandem repeats lie at residues 584-585, 587-588, 589-590, 591-592, 593-594, 595-596, 597-598, 599-600, 601-602, 603-604, 605-606, 607-608, 609-610, 611-612, 613-614, 615-616, 617-618, 619-620, 621-622, 623-624, 625-626, 627-628, 629-630, 631-632, 633-634, and 635-636. Positions 584–642 are enriched in gly residues; sequence GTGGTGTGTGTGTGTGTGTGTGTGTGTGTGTGTGTGTGTGTGTGTGTGTGNGTNSGTGT. The tract at residues 584–644 is 30 X 2 AA approximate tandem repeats of G-[TN]; that stretch reads GTGGTGTGTG…GTNSGTGTGT (61 aa). A 27; approximate repeat occupies 637–638; that stretch reads NS. 3 repeat units span residues 639–640, 641–642, and 643–644. The segment covering 643 to 656 has biased composition (low complexity); that stretch reads GTTSSSRGGSTAIP.

As to quaternary structure, forms a heterodimer with timeless (TIM); the complex then translocates into the nucleus. Phosphorylated with a circadian rhythmicity, probably by the double-time protein (dbt). Phosphorylation could be implicated in the stability of per monomer and in the formation of heterodimer per-tim.

The protein localises to the nucleus. Its subcellular location is the cytoplasm. It localises to the perinuclear region. Essential for biological clock functions. Determines the period length of circadian and ultradian rhythms; an increase in PER dosage leads to shortened circadian rhythms and a decrease leads to lengthened circadian rhythms. Essential for the circadian rhythmicity of locomotor activity, eclosion behavior, and for the rhythmic component of the male courtship song that originates in the thoracic nervous system. The biological cycle depends on the rhythmic formation and nuclear localization of the TIM-PER complex. Light induces the degradation of TIM, which promotes elimination of PER. Nuclear activity of the heterodimer coordinatively regulates PER and TIM transcription through a negative feedback loop. Behaves as a negative element in circadian transcriptional loop. Does not appear to bind DNA, suggesting indirect transcriptional inhibition. The polypeptide is Period circadian protein (per) (Drosophila simulans (Fruit fly)).